The sequence spans 603 residues: Cdc42-interacting protein 4 (603 aa).

Residues 1–117 (MDWGTELWDQ…EMKQERKMHF (117 aa)) are required for podosome formation and interaction with AKAP9 and microtubules. The tract at residues 1–117 (MDWGTELWDQ…EMKQERKMHF (117 aa)) is required for translocation to the plasma membrane in response to insulin. An F-BAR domain is found at 1-264 (MDWGTELWDQ…AAESVDAKND (264 aa)). A coiled-coil region spans residues 67–259 (FSQQQSFVQL…EGMKVAAESV (193 aa)). Residues 293–539 (RVPSDSSLGT…YTEFDEDFEE (247 aa)) are interaction with CDC42. Positions 293–603 (RVPSDSSLGT…PTSYLRVTLN (311 aa)) are interaction with PDE6G. A disordered region spans residues 295 to 358 (PSDSSLGTPD…PSSPRSGRDP (64 aa)). Phosphoserine is present on residues Ser-296, Ser-298, and Ser-299. Over residues 316–329 (SRAKRWPFGKKNKP) the composition is skewed to basic residues. Residues 333 to 346 (SLSLLGGHLPSTLS) show a composition bias toward low complexity. Phosphoserine occurs at positions 335 and 351. Residues 388–481 (TEDFSHLPPE…ESRVLSNRGD (94 aa)) adopt a coiled-coil conformation. Positions 393 to 470 (HLPPEQQRKR…VQKYEAWLAE (78 aa)) constitute an REM-1 domain. Residues 471-603 (AESRVLSNRG…PTSYLRVTLN (133 aa)) are required for interaction with FASLG and localization to lysosomes. A disordered region spans residues 477–541 (SNRGDSLSRH…EFDEDFEEPA (65 aa)). Ser-482 is subject to Phosphoserine. Residues 487–543 (ARPPDPPTTAPPDSSSSSTNSGSQDNKESSSEEPPSEGQDTPIYTEFDEDFEEPASP) form an interaction with DNM2 and WASL region. The span at 497–510 (PPDSSSSSTNSGSQ) shows a compositional bias: low complexity. Residues 532-603 (EFDEDFEEPA…PTSYLRVTLN (72 aa)) are interaction with DNM1 and WASL. The segment at 540-603 (PASPIGQCVA…PTSYLRVTLN (64 aa)) is required for podosome formation. In terms of domain architecture, SH3 spans 542–603 (SPIGQCVAIY…PTSYLRVTLN (62 aa)). Residues 546 to 603 (QCVAIYHFEGSSEGTVSMSEGEDLSLMEEDKGDGWTRVRRKQGAEGYVPTSYLRVTLN) are interaction with WAS. Residues 548-603 (VAIYHFEGSSEGTVSMSEGEDLSLMEEDKGDGWTRVRRKQGAEGYVPTSYLRVTLN) are interaction with ARHGAP17, DAAM1, DIAPH1 and DIAPH2.

It belongs to the FNBP1 family. Homodimerizes, the dimers can polymerize end-to-end to form filamentous structures. Interacts with AKAP9, ARHGAP17, DAAM1, DIAPH1, DIAPH2, DNM1, FASLG/FASL, GAPVD1, LYN, microtubules, PDE6G, SRC and WAS/WASP. Interacts with the ligand binding domain of the thyroid receptor (TR) in the presence of thyroid hormone. May interact with CTNNB1 and HD/HTT. Interacts specifically with GTP-bound CDC42 and RHOQ. Interacts with DNM2 and WASL. Post-translationally, tyrosine phosphorylated. Also phosphorylated by PKA.

The protein localises to the cytoplasm. The protein resides in the cytoskeleton. It is found in the cell cortex. Its subcellular location is the lysosome. It localises to the golgi apparatus. The protein localises to the cell membrane. The protein resides in the cell projection. It is found in the phagocytic cup. Functionally, required to coordinate membrane tubulation with reorganization of the actin cytoskeleton during endocytosis. Binds to lipids such as phosphatidylinositol 4,5-bisphosphate and phosphatidylserine and promotes membrane invagination and the formation of tubules. Also promotes CDC42-induced actin polymerization by recruiting WASL/N-WASP which in turn activates the Arp2/3 complex. Actin polymerization may promote the fission of membrane tubules to form endocytic vesicles. Required for the formation of podosomes, actin-rich adhesion structures specific to monocyte-derived cells. May be required for the lysosomal retention of FASLG/FASL. Required for translocation of GLUT4 to the plasma membrane in response to insulin signaling. The protein is Cdc42-interacting protein 4 (Trip10) of Mus musculus (Mouse).